The primary structure comprises 306 residues: Probable cobalamin biosynthesis protein CobD (306 aa).

The next 6 membrane-spanning stretches (helical) occupy residues 17–37 (IGEP…IIFF), 54–74 (LFGF…AYEI), 88–108 (ISLY…IEFS), 155–175 (ITDS…PGAF), 207–227 (ILNF…APFY), and 286–306 (SLKA…VLLM).

This sequence belongs to the CobD/CbiB family.

It is found in the cell membrane. Its pathway is cofactor biosynthesis; adenosylcobalamin biosynthesis. In terms of biological role, converts cobyric acid to cobinamide by the addition of aminopropanol on the F carboxylic group. The protein is Probable cobalamin biosynthesis protein CobD of Methanococcus maripaludis (strain C5 / ATCC BAA-1333).